The chain runs to 509 residues: Methionine--tRNA ligase (509 aa).

The 'HIGH' region signature appears at Tyr-12–His-22. The 'KMSKS' region signature appears at Lys-295 to Ser-299. ATP is bound at residue Lys-298.

This sequence belongs to the class-I aminoacyl-tRNA synthetase family. MetG type 2B subfamily. As to quaternary structure, monomer.

It localises to the cytoplasm. The catalysed reaction is tRNA(Met) + L-methionine + ATP = L-methionyl-tRNA(Met) + AMP + diphosphate. In terms of biological role, is required not only for elongation of protein synthesis but also for the initiation of all mRNA translation through initiator tRNA(fMet) aminoacylation. The chain is Methionine--tRNA ligase from Rickettsia bellii (strain RML369-C).